Reading from the N-terminus, the 278-residue chain is Elongation factor Ts (278 aa).

An involved in Mg(2+) ion dislocation from EF-Tu region spans residues 80-83 (TDFV).

The protein belongs to the EF-Ts family.

The protein resides in the cytoplasm. Functionally, associates with the EF-Tu.GDP complex and induces the exchange of GDP to GTP. It remains bound to the aminoacyl-tRNA.EF-Tu.GTP complex up to the GTP hydrolysis stage on the ribosome. This is Elongation factor Ts from Pseudarthrobacter chlorophenolicus (strain ATCC 700700 / DSM 12829 / CIP 107037 / JCM 12360 / KCTC 9906 / NCIMB 13794 / A6) (Arthrobacter chlorophenolicus).